A 293-amino-acid chain; its full sequence is Calcium uniporter protein 2, mitochondrial (293 aa).

The transit peptide at 1–33 (MWSVMGLVRRTAMSSTVNKASPVRSLLGGFRCL) directs the protein to the mitochondrion. The helical transmembrane segment at 168–188 (ILWGGLGYSVVQIGIFVRLTF) threads the bilayer. The Selectivity filter motif lies at 193 to 201 (WDVMEPITF). Residue E197 participates in Ca(2+) binding. The chain crosses the membrane as a helical span at residues 198–218 (PITFFTTATGIIVGYAYFLMT).

This sequence belongs to the MCU (TC 1.A.77) family.

The protein localises to the mitochondrion inner membrane. The enzyme catalyses Ca(2+)(in) = Ca(2+)(out). Its function is as follows. Mitochondrial inner membrane calcium uniporter that mediates calcium uptake into mitochondria. Constitutes a pore-forming and calcium-conducting subunit. Mitochondrial calcium homeostasis plays key roles in cellular physiology and regulates cell bioenergetics, cytoplasmic calcium signals and activation of cell death pathways. The sequence is that of Calcium uniporter protein 2, mitochondrial from Arabidopsis thaliana (Mouse-ear cress).